A 470-amino-acid polypeptide reads, in one-letter code: Sugar transporter ERD6-like 8 (470 aa).

Residues 1-16 (METRKDDMEKRNDKSE) show a composition bias toward basic and acidic residues. The interval 1-24 (METRKDDMEKRNDKSEPLLLPENG) is disordered. 12 helical membrane-spanning segments follow: residues 33–53 (WMVY…GTCV), 73–93 (QFSV…ITSG), 110–130 (VISA…PLDF), 133–153 (FLTG…IAEI), 164–184 (TLNQ…GAVV), 188–208 (TLAL…WFIP), 270–290 (FVIV…NGVI), 307–327 (GSIL…TLLI), 335–355 (LLMA…NSFL), 373–393 (GVLV…WVIM), 409–429 (VTVV…FLMI), and 434–454 (GTFY…AKLV).

It belongs to the major facilitator superfamily. Sugar transporter (TC 2.A.1.1) family.

Its subcellular location is the membrane. Sugar transporter. The polypeptide is Sugar transporter ERD6-like 8 (Arabidopsis thaliana (Mouse-ear cress)).